Consider the following 77-residue polypeptide: Small ribosomal subunit protein bS20 (77 aa).

Residues 47-77 (ASSSIDKAESKGLIHKNKASRDKARLAAKLG) form a disordered region.

This sequence belongs to the bacterial ribosomal protein bS20 family.

Functionally, binds directly to 16S ribosomal RNA. The sequence is that of Small ribosomal subunit protein bS20 from Streptococcus pyogenes serotype M1.